The sequence spans 85 residues: Conotoxin Vx15a (85 aa).

The signal sequence occupies residues 1–23; the sequence is MEKLTVLILVATVLLTIQVLAQS. The propeptide occupies 24–49; sequence DGDKHLMKRSKQYATKRLSALMRGHR. A Pyrrolidone carboxylic acid modification is found at Gln-50.

This sequence belongs to the conotoxin O2 superfamily. Post-translationally, contains 4 disulfide bonds. Expressed by the venom duct.

The protein resides in the secreted. The chain is Conotoxin Vx15a from Conus vexillum (Flag cone).